We begin with the raw amino-acid sequence, 421 residues long: uncharacterized protein (421 aa).

4 CBS domains span residues 13–74 (MTKD…VRSL), 74–133 (LMYK…MKDT), 139–195 (MTRN…PKKK), and 217–274 (MNTP…KGAM).

This is an uncharacterized protein from Methanocaldococcus jannaschii (strain ATCC 43067 / DSM 2661 / JAL-1 / JCM 10045 / NBRC 100440) (Methanococcus jannaschii).